A 261-amino-acid polypeptide reads, in one-letter code: MGYLKKVGMCISLLIVIIFVTSCGGGNKITGDSKETQIKKSFAKTLDMYPIKNLDDLYDKEGYRDGEFKKGDKGTWGISSAMVKQPKGKIMRSRGMYLFLNRNTRTAKGYFIVDVTSNDTLKKTEDKEKRYPVKMVNNKIIPIGPINDEGIKKEIENFKFFSQYGDFKGLKNYQNGDYSYNSEAPTYSAKFQLSNDDYNVKQLRKMYDIQTKKAPKLLLKCTGDLKGSSIGHKDIEFTFVENQEENVFFTDSLEFTPSEDY.

An N-terminal signal peptide occupies residues 1 to 22; it reads MGYLKKVGMCISLLIVIIFVTS. C23 carries the N-palmitoyl cysteine lipid modification. C23 is lipidated: S-diacylglycerol cysteine.

It belongs to the staphylococcal tandem lipoprotein family.

It is found in the cell membrane. This is an uncharacterized protein from Staphylococcus aureus (strain bovine RF122 / ET3-1).